A 463-amino-acid polypeptide reads, in one-letter code: MFS-type transporter criB (463 aa).

11 consecutive transmembrane segments (helical) span residues 5 to 27 (LVLS…SGIM), 46 to 66 (MVGT…LTAG), 83 to 103 (VFVV…MLLI), 106 to 126 (LVTG…QAEI), 141 to 161 (LMLA…SFVN), 168 to 188 (MPLA…YFLP), 256 to 276 (LFLG…VINY), 293 to 313 (IFLS…ALFF), 323 to 343 (LMMA…LTAA), 355 to 375 (VAMI…LSWV), and 402 to 422 (FYFL…FLYP).

This sequence belongs to the major facilitator superfamily. Sugar transporter (TC 2.A.1.1) family.

It localises to the membrane. In terms of biological role, MFS-type transporter; part of the gene cluster that mediates the biosynthesis of echinulin family alkaloid. The protein is MFS-type transporter criB of Aspergillus cristatus (Chinese Fuzhuan brick tea-fermentation fungus).